A 227-amino-acid polypeptide reads, in one-letter code: Orotidine 5'-phosphate decarboxylase (227 aa).

Substrate is bound by residues D8, K30, 59–68, T118, R178, Q187, G207, and R208; that span reads DLKLYDIPYT. Catalysis depends on K61, which acts as the Proton donor.

It belongs to the OMP decarboxylase family. Type 1 subfamily. In terms of assembly, homodimer.

The catalysed reaction is orotidine 5'-phosphate + H(+) = UMP + CO2. It functions in the pathway pyrimidine metabolism; UMP biosynthesis via de novo pathway; UMP from orotate: step 2/2. Functionally, catalyzes the decarboxylation of orotidine 5'-monophosphate (OMP) to uridine 5'-monophosphate (UMP). The protein is Orotidine 5'-phosphate decarboxylase of Helicobacter pylori (strain Shi470).